The chain runs to 735 residues: ATP-dependent DNA helicase Hel308 (735 aa).

Residues glutamine 32 and 50-57 contribute to the ATP site; that span reads APTGSGKT. The Helicase ATP-binding domain occupies 37–201; it reads QAGVEKGENL…WIGGKIVESS (165 aa). The DEAH box signature appears at 146–149; sequence DEIH. Residues 235-431 enclose the Helicase C-terminal domain; it reads DLDLAAEAIE…GLRGLRHFIL (197 aa).

It belongs to the helicase family. Hel308 subfamily. Monomer.

It catalyses the reaction Couples ATP hydrolysis with the unwinding of duplex DNA by translocating in the 3'-5' direction.. The catalysed reaction is ATP + H2O = ADP + phosphate + H(+). Functionally, DNA-dependent ATPase and 3'-5' DNA helicase that may be involved in repair of stalled replication forks. The polypeptide is ATP-dependent DNA helicase Hel308 (Aeropyrum pernix (strain ATCC 700893 / DSM 11879 / JCM 9820 / NBRC 100138 / K1)).